A 396-amino-acid polypeptide reads, in one-letter code: Apolipoprotein A-IV (396 aa).

Residues 1–20 (MFLKAVVLTLALVAVAGARA) form the signal peptide. 13 tandem repeats follow at residues 33–54 (DYFS…KSEL), 60–81 (ALFQ…KKLV), 82–103 (PFAT…EEIG), 115–136 (PHAN…QRLE), 137–158 (PYAD…RQLT), 159–180 (PYAQ…ASLR), 181–202 (PHAD…GRLT), 203–224 (PYAD…RSLA), 225–246 (PYAQ…FQMK), 247–268 (KNAE…QRLA), 269–286 (PLAE…EGLQ), 287–308 (KSLA…RRVE), and 309–330 (PYGE…QKLG). The interval 33–330 (DYFSQLSNNA…QMEQLRQKLG (298 aa)) is 13 X 22 AA approximate tandem repeats. The segment at 361-396 (KESQDKTLSLPELEQQQEQQQEQQQEQVQMLAPLES) is disordered. Residues 374-389 (EQQQEQQQEQQQEQVQ) show a composition bias toward low complexity.

The protein belongs to the apolipoprotein A1/A4/E family. Homodimer. In terms of processing, phosphorylation sites are present in the extracellular medium. In terms of tissue distribution, synthesized primarily in the intestine and secreted in plasma.

It localises to the secreted. In terms of biological role, may have a role in chylomicrons and VLDL secretion and catabolism. Required for efficient activation of lipoprotein lipase by ApoC-II; potent activator of LCAT. Apoa-IV is a major component of HDL and chylomicrons. This chain is Apolipoprotein A-IV, found in Homo sapiens (Human).